We begin with the raw amino-acid sequence, 262 residues long: Hydroxyethylthiazole kinase (262 aa).

Met50 lines the substrate pocket. ATP contacts are provided by Arg125 and Thr171. Gly198 contacts substrate.

It belongs to the Thz kinase family. Mg(2+) is required as a cofactor.

The catalysed reaction is 5-(2-hydroxyethyl)-4-methylthiazole + ATP = 4-methyl-5-(2-phosphooxyethyl)-thiazole + ADP + H(+). It functions in the pathway cofactor biosynthesis; thiamine diphosphate biosynthesis; 4-methyl-5-(2-phosphoethyl)-thiazole from 5-(2-hydroxyethyl)-4-methylthiazole: step 1/1. Its function is as follows. Catalyzes the phosphorylation of the hydroxyl group of 4-methyl-5-beta-hydroxyethylthiazole (THZ). This Shigella sonnei (strain Ss046) protein is Hydroxyethylthiazole kinase.